Consider the following 92-residue polypeptide: Small ribosomal subunit protein bS6 (92 aa).

Belongs to the bacterial ribosomal protein bS6 family.

Its function is as follows. Binds together with bS18 to 16S ribosomal RNA. This chain is Small ribosomal subunit protein bS6, found in Clostridioides difficile (strain 630) (Peptoclostridium difficile).